The sequence spans 801 residues: Squamosa promoter-binding-like protein 7 (801 aa).

2 disordered regions span residues 1 to 23 (MSSLSQSPPPPEMDIQPPALVND) and 59 to 91 (SPPLPPLIPTQTPAESELDPSPEESGSGSDRVR). The segment at 135–212 (VARCQVPDCE…ERHNNRRKRK (78 aa)) adopts an SBP-type; atypical zinc-finger fold. Zn(2+)-binding residues include Cys138, Cys143, Cys160, Cys163, Cys179, Cys182, His186, and Cys198. Positions 195 to 211 (KRSCRRKLERHNNRRKR) match the Bipartite nuclear localization signal motif. The span at 203–213 (ERHNNRRKRKP) shows a compositional bias: basic residues. Disordered stretches follow at residues 203 to 258 (ERHN…PSLI) and 286 to 313 (GSGEAQPDEGMNDTKFERSPSNGDNKSA). Polar residues predominate over residues 222-233 (EQQQVLSQNDNS). The span at 249-258 (QRAEEEPSLI) shows a compositional bias: basic and acidic residues. A compositionally biased stretch (polar residues) spans 304–313 (SPSNGDNKSA).

As to quaternary structure, homodimer. Interacts with KIN17. Interacts with HY5. Zn(2+) is required as a cofactor. As to expression, expressed in roots rosette leaves, cauline leaves, stems, flowers and siliques.

It is found in the nucleus speckle. In terms of biological role, transcription factor that participates in reprogramming global gene expression during copper deficiency in order to improve the metal uptake and prioritize its distribution to copper proteins of major importance. Binds directly to 5'-GTAC-3' motifs in the microRNA (miRNA) promoter of the stress-responsive miRNAs miR398b and miR398c to activate their transcription. During copper deficiency, activates the copper transporters COPT1 and COPT2, and the copper chaperone CCH, directly or indirectly via miRNAs. Required for the expression of the miRNAs miR397, miR408 and miR857. Acts coordinately with HY5 to regulate miR408 and its target genes in response to changes in light and copper conditions. Activates miR857 and its target genes in response to low copper conditions. Involved in cadmium stress response by regulating miR397a, miR398b, miR398c and miR857. Required for iron homeostasis during copper deficiency. The protein is Squamosa promoter-binding-like protein 7 (SPL7) of Arabidopsis thaliana (Mouse-ear cress).